A 478-amino-acid polypeptide reads, in one-letter code: tRNA (guanine(10)-N(2))-methyltransferase TRMT11 (478 aa).

A disordered region spans residues 457-478; sequence EERARSEMANAENVKSKGKEDV.

Belongs to the class I-like SAM-binding methyltransferase superfamily. TRM11 methyltransferase family. In terms of assembly, part of the heterodimeric TRMT11-TRM112 methyltransferase complex; this complex forms an active tRNA methyltransferase, where TRMT112 acts as an activator of the catalytic subunit TRMT11.

The protein localises to the cytoplasm. The enzyme catalyses guanosine(10) in tRNA + S-adenosyl-L-methionine = N(2)-methylguanosine(10) in tRNA + S-adenosyl-L-homocysteine + H(+). Functionally, catalytic subunit of the TRMT11-TRM112 methyltransferase complex, that specifically mediates the S-adenosyl-L-methionine-dependent N(2)-methylation of guanosine nucleotide at position 10 (m2G10) in tRNAs. This is one of the major tRNA (guanine-N(2))-methyltransferases. In Xenopus laevis (African clawed frog), this protein is tRNA (guanine(10)-N(2))-methyltransferase TRMT11 (trmt11.L).